Reading from the N-terminus, the 702-residue chain is Lipase maturation factor 2 (702 aa).

The next 10 membrane-spanning stretches (helical) occupy residues 10–30 (LFLQGVAAVYLFAFASLYTQI), 75–95 (AQGLDLLTLLGTVLALGALLL), 102–122 (FIYLLLWAAYLSACQVGQVFL), 123–143 (YFQWDSLLLETGFLAILVAPL), 164–184 (DLPFWLVRWLLFRLMFASGVV), 226–246 (LSVVATFLIEIAVPPLFFAPI), 259–279 (LLQILIIITGNYNFFNLLTLV), 316–336 (LMLELTVYGLLAYGTIYYFGL), 363–383 (VTLPTVWLGTASLAWELLIAL), and 396–416 (FFAGIQLSVLGTATVFLFLIS). An N-linked (GlcNAc...) asparagine glycan is attached at N488. Residues 628 to 648 (QLSPLEPSILLWGLLGAVVAI) form a helical membrane-spanning segment. Residues 660-702 (LQSSKQTREEKRKQAPKKDSRAVSEQTAPNSNSNGSWAPRRKK) are disordered. Positions 665–681 (QTREEKRKQAPKKDSRA) are enriched in basic and acidic residues. Polar residues predominate over residues 682–695 (VSEQTAPNSNSNGS).

It belongs to the lipase maturation factor family.

It is found in the endoplasmic reticulum membrane. Its function is as follows. Involved in the maturation of specific proteins in the endoplasmic reticulum. May be required for maturation and transport of active lipoprotein lipase (LPL) through the secretory pathway. The polypeptide is Lipase maturation factor 2 (Lmf2) (Rattus norvegicus (Rat)).